Here is a 366-residue protein sequence, read N- to C-terminus: Chorismate synthase (366 aa).

NADP(+) contacts are provided by R47 and R53. Residues 124 to 126 (RSS), G286, 301 to 305 (KPTAT), and R327 each bind FMN.

Belongs to the chorismate synthase family. As to quaternary structure, homotetramer. Requires FMNH2 as cofactor.

The catalysed reaction is 5-O-(1-carboxyvinyl)-3-phosphoshikimate = chorismate + phosphate. It participates in metabolic intermediate biosynthesis; chorismate biosynthesis; chorismate from D-erythrose 4-phosphate and phosphoenolpyruvate: step 7/7. Functionally, catalyzes the anti-1,4-elimination of the C-3 phosphate and the C-6 proR hydrogen from 5-enolpyruvylshikimate-3-phosphate (EPSP) to yield chorismate, which is the branch point compound that serves as the starting substrate for the three terminal pathways of aromatic amino acid biosynthesis. This reaction introduces a second double bond into the aromatic ring system. The protein is Chorismate synthase of Microcystis aeruginosa (strain NIES-843 / IAM M-2473).